Here is a 230-residue protein sequence, read N- to C-terminus: tRNA (guanine-N(1)-)-methyltransferase (230 aa).

Residues G114 and 138–143 contribute to the S-adenosyl-L-methionine site; that span reads IGDYVL.

This sequence belongs to the RNA methyltransferase TrmD family. As to quaternary structure, homodimer.

Its subcellular location is the cytoplasm. The catalysed reaction is guanosine(37) in tRNA + S-adenosyl-L-methionine = N(1)-methylguanosine(37) in tRNA + S-adenosyl-L-homocysteine + H(+). In terms of biological role, specifically methylates guanosine-37 in various tRNAs. In Rhodococcus jostii (strain RHA1), this protein is tRNA (guanine-N(1)-)-methyltransferase.